Here is an 849-residue protein sequence, read N- to C-terminus: Probable receptor-like protein kinase At1g30570 (849 aa).

An N-terminal signal peptide occupies residues 1-28; it reads MSKLRKKYLEHLLCVLIFFTYVIGYGEA. The Extracellular portion of the chain corresponds to 29–429; the sequence is QSKSFLVDCG…GHSVSDSKMR (401 aa). Residues asparagine 40, asparagine 57, asparagine 94, asparagine 122, asparagine 158, asparagine 268, asparagine 271, asparagine 305, and asparagine 343 are each glycosylated (N-linked (GlcNAc...) asparagine). The chain crosses the membrane as a helical span at residues 430–450; sequence IIWISVGAGIAIIIFFVFLGI. The Cytoplasmic segment spans residues 451-849; sequence LVVCLCKKRR…QTGSALHNSA (399 aa). The region spanning 520–793 is the Protein kinase domain; sequence FDDGLAIGVG…GEVLWSLEYV (274 aa). ATP is bound by residues 526 to 534 and lysine 548; that span reads IGVGGFGKV. Aspartate 644 (proton acceptor) is an active-site residue. Residues 810 to 849 form a disordered region; the sequence is FSSSQAVEEAPESFTLPACSNQDSSETEQSQTGSALHNSA. Over residues 827-849 the composition is skewed to polar residues; the sequence is ACSNQDSSETEQSQTGSALHNSA.

It belongs to the protein kinase superfamily. Ser/Thr protein kinase family.

The protein localises to the cell membrane. In Arabidopsis thaliana (Mouse-ear cress), this protein is Probable receptor-like protein kinase At1g30570.